The chain runs to 190 residues: Anthranilate synthase component II (190 aa).

Residues 1–190 (MILIIDNYDS…ENFCTGIAKA (190 aa)) form the Glutamine amidotransferase type-1 domain. 51–53 (GPG) provides a ligand contact to L-glutamine. The active-site Nucleophile; for GATase activity is Cys-76. L-glutamine is bound by residues Gln-80 and 126–127 (SL). Active-site residues include His-167 and Glu-169.

In terms of assembly, tetramer of two components I and two components II.

It carries out the reaction chorismate + L-glutamine = anthranilate + pyruvate + L-glutamate + H(+). It functions in the pathway amino-acid biosynthesis; L-tryptophan biosynthesis; L-tryptophan from chorismate: step 1/5. In Haloarcula marismortui (strain ATCC 43049 / DSM 3752 / JCM 8966 / VKM B-1809) (Halobacterium marismortui), this protein is Anthranilate synthase component II (trpG2).